The primary structure comprises 391 residues: DNA repair protein NreB (391 aa).

The segment at 3–17 adopts a C4-type zinc-finger fold; that stretch reads CIECRGRMLCSRKVC. A PIP motif motif is present at residues 384-391; that stretch reads QRTLWEFM.

It belongs to the Nre family. In terms of assembly, interacts with the DNA polymerase sliding clamp (PCNA) via the PIP (PCNA-interacting peptide) motif.

In terms of biological role, involved in DNA damage repair. This chain is DNA repair protein NreB, found in Archaeoglobus fulgidus (strain ATCC 49558 / DSM 4304 / JCM 9628 / NBRC 100126 / VC-16).